Consider the following 484-residue polypeptide: Malonate-semialdehyde dehydrogenase 2 (484 aa).

Positions 153, 177, 180, 181, 230, and 252 each coordinate NAD(+). C285 serves as the catalytic Nucleophile. An NAD(+)-binding site is contributed by E385.

The protein belongs to the aldehyde dehydrogenase family. IolA subfamily. As to quaternary structure, homotetramer.

It carries out the reaction 3-oxopropanoate + NAD(+) + CoA + H2O = hydrogencarbonate + acetyl-CoA + NADH + H(+). The enzyme catalyses 2-methyl-3-oxopropanoate + NAD(+) + CoA + H2O = propanoyl-CoA + hydrogencarbonate + NADH + H(+). Its pathway is polyol metabolism; myo-inositol degradation into acetyl-CoA; acetyl-CoA from myo-inositol: step 7/7. Functionally, catalyzes the oxidation of malonate semialdehyde (MSA) and methylmalonate semialdehyde (MMSA) into acetyl-CoA and propanoyl-CoA, respectively. Is involved in a myo-inositol catabolic pathway. Bicarbonate, and not CO2, is the end-product of the enzymatic reaction. This chain is Malonate-semialdehyde dehydrogenase 2, found in Geobacillus kaustophilus (strain HTA426).